A 298-amino-acid polypeptide reads, in one-letter code: 4-hydroxy-tetrahydrodipicolinate synthase (298 aa).

T51 provides a ligand contact to pyruvate. Y139 serves as the catalytic Proton donor/acceptor. K167 acts as the Schiff-base intermediate with substrate in catalysis. I209 is a pyruvate binding site.

This sequence belongs to the DapA family. In terms of assembly, homotetramer; dimer of dimers.

It is found in the cytoplasm. It catalyses the reaction L-aspartate 4-semialdehyde + pyruvate = (2S,4S)-4-hydroxy-2,3,4,5-tetrahydrodipicolinate + H2O + H(+). The protein operates within amino-acid biosynthesis; L-lysine biosynthesis via DAP pathway; (S)-tetrahydrodipicolinate from L-aspartate: step 3/4. In terms of biological role, catalyzes the condensation of (S)-aspartate-beta-semialdehyde [(S)-ASA] and pyruvate to 4-hydroxy-tetrahydrodipicolinate (HTPA). The protein is 4-hydroxy-tetrahydrodipicolinate synthase of Haemophilus influenzae (strain PittEE).